The following is a 188-amino-acid chain: FMN reductase (NADH) RutF (188 aa).

The protein belongs to the non-flavoprotein flavin reductase family. RutF subfamily.

The catalysed reaction is FMNH2 + NAD(+) = FMN + NADH + 2 H(+). In terms of biological role, catalyzes the reduction of FMN to FMNH2 which is used to reduce pyrimidine by RutA via the Rut pathway. The protein is FMN reductase (NADH) RutF of Acinetobacter baylyi (strain ATCC 33305 / BD413 / ADP1).